The chain runs to 304 residues: Carnitine monooxygenase reductase subunit (304 aa).

Positions 1–93 constitute an FAD-binding FR-type domain; sequence MEQLTPLIKR…SEPKNLFPLA (93 aa). The 86-residue stretch at 219–304 folds into the 2Fe-2S ferredoxin-type domain; sequence FTVVLAKSNQ…AKGKKLVLDL (86 aa). [2Fe-2S] cluster contacts are provided by Cys-253, Cys-258, Cys-261, and Cys-291.

It belongs to the PDR/VanB family. CntB subfamily. Composed of an oxygenase subunit and a reductase subunit. FMN serves as cofactor. Requires [2Fe-2S] cluster as cofactor.

The catalysed reaction is (R)-carnitine + NADH + O2 + H(+) = (3R)-3-hydroxy-4-oxobutanoate + trimethylamine + NAD(+) + H2O. The enzyme catalyses (R)-carnitine + NADPH + O2 + H(+) = (3R)-3-hydroxy-4-oxobutanoate + trimethylamine + NADP(+) + H2O. The protein operates within amine and polyamine metabolism; carnitine metabolism. With respect to regulation, inhibited by EDTA. Functionally, converts carnitine to trimethylamine and malic semialdehyde. Acts on both enantiomers. The polypeptide is Carnitine monooxygenase reductase subunit (Acinetobacter pittii (strain PHEA-2)).